A 359-amino-acid chain; its full sequence is Chorismate synthase (359 aa).

Arg-48 and Arg-54 together coordinate NADP(+). FMN-binding positions include Arg-125–Ser-127, Asn-243–Ala-244, Gly-283, Lys-298–Ser-302, and Arg-324.

Belongs to the chorismate synthase family. In terms of assembly, homotetramer. It depends on FMNH2 as a cofactor.

The enzyme catalyses 5-O-(1-carboxyvinyl)-3-phosphoshikimate = chorismate + phosphate. It functions in the pathway metabolic intermediate biosynthesis; chorismate biosynthesis; chorismate from D-erythrose 4-phosphate and phosphoenolpyruvate: step 7/7. In terms of biological role, catalyzes the anti-1,4-elimination of the C-3 phosphate and the C-6 proR hydrogen from 5-enolpyruvylshikimate-3-phosphate (EPSP) to yield chorismate, which is the branch point compound that serves as the starting substrate for the three terminal pathways of aromatic amino acid biosynthesis. This reaction introduces a second double bond into the aromatic ring system. The polypeptide is Chorismate synthase (Mannheimia succiniciproducens (strain KCTC 0769BP / MBEL55E)).